A 159-amino-acid polypeptide reads, in one-letter code: Transcriptional repressor NrdR (159 aa).

Positions 1–22 (MRCPFCGSEDTQVKDSRPAEDN) are disordered. The segment at 3–34 (CPFCGSEDTQVKDSRPAEDNTSIRRRRICPDC) is a zinc-finger region. The segment covering 11-22 (TQVKDSRPAEDN) has biased composition (basic and acidic residues). In terms of domain architecture, ATP-cone spans 49-139 (LMVIKKSGRK…VYRDFSHAED (91 aa)).

This sequence belongs to the NrdR family. Requires Zn(2+) as cofactor.

In terms of biological role, negatively regulates transcription of bacterial ribonucleotide reductase nrd genes and operons by binding to NrdR-boxes. The protein is Transcriptional repressor NrdR of Agrobacterium fabrum (strain C58 / ATCC 33970) (Agrobacterium tumefaciens (strain C58)).